The sequence spans 458 residues: UDP-N-acetylmuramate--L-alanine ligase (458 aa).

115-121 (GSHGKTT) is a binding site for ATP.

Belongs to the MurCDEF family.

It is found in the cytoplasm. It carries out the reaction UDP-N-acetyl-alpha-D-muramate + L-alanine + ATP = UDP-N-acetyl-alpha-D-muramoyl-L-alanine + ADP + phosphate + H(+). It participates in cell wall biogenesis; peptidoglycan biosynthesis. Functionally, cell wall formation. In Anaeromyxobacter dehalogenans (strain 2CP-C), this protein is UDP-N-acetylmuramate--L-alanine ligase.